Consider the following 260-residue polypeptide: Cytochrome c oxidase subunit 3 (260 aa).

Topologically, residues 1-15 (MAHQAHAYHMVDPSP) are mitochondrial matrix. A helical membrane pass occupies residues 16 to 34 (WPLTGAVAALLLTSGLAMW). Residues 35–40 (FHFGSM) are Mitochondrial intermembrane-facing. A helical transmembrane segment spans residues 41–66 (ILLTLGLITMVLTMIQWWRDVIREGT). At 67-72 (FQGHHT) the chain is on the mitochondrial matrix side. A helical transmembrane segment spans residues 73–105 (PPVQKGLRYGMILFITSEVFFFIGFFWAFYNSS). The Mitochondrial intermembrane segment spans residues 106-128 (LAPTYELGECWPPTGITPLNPFE). A helical membrane pass occupies residues 129–152 (VPLLNTAVLLASGVTVTWAHHSIM). At 153 to 155 (HGD) the chain is on the mitochondrial matrix side. A helical transmembrane segment spans residues 156-183 (RKEAIQSLTLTILLGLYFTALQAMEYYE). Over 184 to 190 (APFTIAD) the chain is Mitochondrial intermembrane. The chain crosses the membrane as a helical span at residues 191-223 (GVYGSTFFVATGFHGLHVIIGSLFLSVCLLRQI). The Mitochondrial matrix segment spans residues 224 to 232 (QYHFTSKHH). The helical transmembrane segment at 233-255 (FGFEAAWYWHFVDVVWLFLYVSI) threads the bilayer. The Mitochondrial intermembrane segment spans residues 256 to 260 (YWWGS).

It belongs to the cytochrome c oxidase subunit 3 family. Component of the cytochrome c oxidase (complex IV, CIV), a multisubunit enzyme composed of 14 subunits. The complex is composed of a catalytic core of 3 subunits MT-CO1, MT-CO2 and MT-CO3, encoded in the mitochondrial DNA, and 11 supernumerary subunits COX4I, COX5A, COX5B, COX6A, COX6B, COX6C, COX7A, COX7B, COX7C, COX8 and NDUFA4, which are encoded in the nuclear genome. The complex exists as a monomer or a dimer and forms supercomplexes (SCs) in the inner mitochondrial membrane with NADH-ubiquinone oxidoreductase (complex I, CI) and ubiquinol-cytochrome c oxidoreductase (cytochrome b-c1 complex, complex III, CIII), resulting in different assemblies (supercomplex SCI(1)III(2)IV(1) and megacomplex MCI(2)III(2)IV(2)).

It is found in the mitochondrion inner membrane. The catalysed reaction is 4 Fe(II)-[cytochrome c] + O2 + 8 H(+)(in) = 4 Fe(III)-[cytochrome c] + 2 H2O + 4 H(+)(out). Functionally, component of the cytochrome c oxidase, the last enzyme in the mitochondrial electron transport chain which drives oxidative phosphorylation. The respiratory chain contains 3 multisubunit complexes succinate dehydrogenase (complex II, CII), ubiquinol-cytochrome c oxidoreductase (cytochrome b-c1 complex, complex III, CIII) and cytochrome c oxidase (complex IV, CIV), that cooperate to transfer electrons derived from NADH and succinate to molecular oxygen, creating an electrochemical gradient over the inner membrane that drives transmembrane transport and the ATP synthase. Cytochrome c oxidase is the component of the respiratory chain that catalyzes the reduction of oxygen to water. Electrons originating from reduced cytochrome c in the intermembrane space (IMS) are transferred via the dinuclear copper A center (CU(A)) of subunit 2 and heme A of subunit 1 to the active site in subunit 1, a binuclear center (BNC) formed by heme A3 and copper B (CU(B)). The BNC reduces molecular oxygen to 2 water molecules using 4 electrons from cytochrome c in the IMS and 4 protons from the mitochondrial matrix. The sequence is that of Cytochrome c oxidase subunit 3 (mt-co3) from Xenopus laevis (African clawed frog).